A 158-amino-acid chain; its full sequence is C-type lectin mannose-binding isoform (158 aa).

The signal sequence occupies residues 1–23 (MGRFLLVTLSLLVGAFSLNEANS). Disulfide bonds link cysteine 26-cysteine 37, cysteine 54-cysteine 154, cysteine 61-cysteine 156, and cysteine 129-cysteine 146. One can recognise a C-type lectin domain in the interval 33–155 (KNGFCYKVFN…CKALYSFICQ (123 aa)). Residues 119-121 (EPN) carry the Mannose-binding motif. Residue asparagine 121 is glycosylated (N-linked (GlcNAc...) asparagine). Glutamate 127, asparagine 142, and aspartate 143 together coordinate Ca(2+).

It belongs to the true venom lectin family. In terms of assembly, dimer. Probably disulfide-linked homodimer. As to expression, expressed by the venom gland.

It is found in the secreted. In terms of biological role, mannose-binding lectin that binds to and agglutinates rabbit (but not human) erythrocytes in a calcium-dependent manner. The chain is C-type lectin mannose-binding isoform from Oxyuranus scutellatus (Coastal taipan).